The sequence spans 283 residues: Succinate dehydrogenase [ubiquinone] iron-sulfur subunit, mitochondrial (283 aa).

Residues 66–145 (KKPTLQTYSI…PVKIYPLPHM (80 aa)) form the 2Fe-2S ferredoxin-type domain. Cys-105, Cys-110, Cys-113, and Cys-125 together coordinate [2Fe-2S] cluster. Positions 186 to 216 (DRKKLDGMYECILCACCSTSCPSYWWNQDEY) constitute a 4Fe-4S ferredoxin-type domain. 3 residues coordinate [4Fe-4S] cluster: Cys-196, Cys-199, and Cys-202. Cys-206 is a binding site for [3Fe-4S] cluster. Position 211 (Trp-211) interacts with a ubiquinone. Cys-253 and Cys-259 together coordinate [3Fe-4S] cluster. [4Fe-4S] cluster is bound at residue Cys-263.

The protein belongs to the succinate dehydrogenase/fumarate reductase iron-sulfur protein family. As to quaternary structure, component of complex II composed of four subunits: a flavoprotein (FP), an iron-sulfur protein (IP), and a cytochrome b composed of a large and a small subunit. It depends on [2Fe-2S] cluster as a cofactor. [3Fe-4S] cluster serves as cofactor. Requires [4Fe-4S] cluster as cofactor.

The protein resides in the mitochondrion inner membrane. The catalysed reaction is a quinone + succinate = fumarate + a quinol. It functions in the pathway carbohydrate metabolism; tricarboxylic acid cycle; fumarate from succinate (eukaryal route): step 1/1. Its function is as follows. Iron-sulfur protein (IP) subunit of succinate dehydrogenase (SDH) that is involved in complex II of the mitochondrial electron transport chain and is responsible for transferring electrons from succinate to ubiquinone (coenzyme Q). This chain is Succinate dehydrogenase [ubiquinone] iron-sulfur subunit, mitochondrial (SDH2), found in Uromyces fabae (Rust fungus).